Consider the following 162-residue polypeptide: MSAAEGAVVFSEEKEALVLKSWAIMKKDSANLGLRFFLKIFEIAPSARQMFPFLRDSDVPLETNPKLKTHAVSVFVMTCEAAAQLRKAGKITVRETTLKRLGGTHLKYGVADGHFEVTRFALLETIKEALPADMWGPEMRNAWGEAYDQLVAAIKQEMKPAE.

Residues 9–159 (VFSEEKEALV…LVAAIKQEMK (151 aa)) form the Globin domain. The Homodimerization motif lies at 42–46 (EIAPS). Heme b is bound by residues Lys66, His70, Arg100, Thr104, and His105. The Homodimerization signature appears at 112-124 (DGHFEVTRFALLE).

Belongs to the plant globin family. As to quaternary structure, homodimer. The cofactor is heme b. As to expression, seeds and roots.

It is found in the cytoplasm. The protein resides in the nucleus. It carries out the reaction Fe(III)-heme b-[protein] + nitric oxide + H2O = Fe(II)-heme b-[protein] + nitrite + 2 H(+). In terms of biological role, phytoglobin that reduces nitrite to nitric oxide (NO) under anoxic conditions (e.g. during flooding or in waterlogged soil). May not function as an oxygen storage or transport protein. Has an unusually high affinity for O(2) through an hexacoordinate heme iron because of a very low dissociation constant. This chain is Anaerobic nitrite reductase GLB1, found in Hordeum vulgare (Barley).